The primary structure comprises 487 residues: Glycogen synthase (487 aa).

Lys20 provides a ligand contact to ADP-alpha-D-glucose.

It belongs to the glycosyltransferase 1 family. Bacterial/plant glycogen synthase subfamily.

The catalysed reaction is [(1-&gt;4)-alpha-D-glucosyl](n) + ADP-alpha-D-glucose = [(1-&gt;4)-alpha-D-glucosyl](n+1) + ADP + H(+). It participates in glycan biosynthesis; glycogen biosynthesis. Synthesizes alpha-1,4-glucan chains using ADP-glucose. The chain is Glycogen synthase from Aliivibrio fischeri (strain MJ11) (Vibrio fischeri).